The chain runs to 841 residues: Rhomboid-like protease 5 (841 aa).

The segment covering 1 to 10 (MSSKGGSSRL) has biased composition (low complexity). Positions 1 to 289 (MSSKGGSSRL…GGDGGPRRHS (289 aa)) are disordered. A compositionally biased stretch (basic and acidic residues) spans 11-51 (GSKDLKKMTSRTERELRDSGRVRGEVERVEKRLRATAKVKE). Positions 95–132 (LRPASSSPRLASSSRPTESTLPSSSSRALQGASSSSSS) are enriched in low complexity. Composition is skewed to basic and acidic residues over residues 154-163 (LRQEKKRLPE), 209-230 (RTAEKLEEGTASHRDGSRRGSV), and 243-275 (SSHEFESSPQREERMQPQETGRRELSSEPRSGD). A run of 6 helical transmembrane segments spans residues 323 to 343 (FLMIFLTSSVLFFVFLQELVL), 464 to 484 (MFRVVWGMFLHGGWMHLLLNV), 492 to 512 (WILEPAWGFLRTLSLWIVGGV), 526 to 546 (VTVGSSGAFYGLLGALVPFSI), 571 to 590 (FGNMVGVQGVDNNAHLGGLI), and 673 to 693 (FAAAVGLVTFWSVLWLYLLVP). The Nucleophile role is filled by Ser531. Residue His585 is part of the active site.

The protein belongs to the peptidase S54 family.

The protein resides in the membrane. The enzyme catalyses Cleaves type-1 transmembrane domains using a catalytic dyad composed of serine and histidine that are contributed by different transmembrane domains.. In terms of biological role, serine protease involved in intramembrane proteolysis. Cleaves microneme adhesins, such as MIC2. This step is essential for efficient invasion of host cells. Catalyzes intramembrane proteolysis of AMA1. This Toxoplasma gondii protein is Rhomboid-like protease 5 (ROM5).